A 184-amino-acid polypeptide reads, in one-letter code: Ribosome-recycling factor (184 aa).

It belongs to the RRF family.

It localises to the cytoplasm. Responsible for the release of ribosomes from messenger RNA at the termination of protein biosynthesis. May increase the efficiency of translation by recycling ribosomes from one round of translation to another. The polypeptide is Ribosome-recycling factor (Acinetobacter baumannii (strain AB307-0294)).